The sequence spans 570 residues: Pyruvate decarboxylase (570 aa).

A propeptide spans 1–2 (removed in mature form); sequence MV. Substrate-binding residues include Asp-33 and His-120. Positions 394 to 476 are thiamine pyrophosphate binding; it reads DSWFNGIQLK…MLINNRGYTI (83 aa). Residues Asp-444, Asn-471, and Gly-473 each coordinate Mg(2+). A substrate-binding site is contributed by Glu-477.

The protein belongs to the TPP enzyme family. As to quaternary structure, homomer. A metal cation is required as a cofactor. It depends on thiamine diphosphate as a cofactor.

The protein localises to the cytoplasm. The catalysed reaction is a 2-oxocarboxylate + H(+) = an aldehyde + CO2. Its pathway is carbohydrate metabolism; pyruvate metabolism. This Neurospora crassa (strain ATCC 24698 / 74-OR23-1A / CBS 708.71 / DSM 1257 / FGSC 987) protein is Pyruvate decarboxylase (cfp).